A 210-amino-acid polypeptide reads, in one-letter code: ATP-dependent Clp protease proteolytic subunit (210 aa).

The active-site Nucleophile is serine 107. Residue histidine 132 is part of the active site.

It belongs to the peptidase S14 family. Fourteen ClpP subunits assemble into 2 heptameric rings which stack back to back to give a disk-like structure with a central cavity, resembling the structure of eukaryotic proteasomes.

The protein resides in the cytoplasm. It carries out the reaction Hydrolysis of proteins to small peptides in the presence of ATP and magnesium. alpha-casein is the usual test substrate. In the absence of ATP, only oligopeptides shorter than five residues are hydrolyzed (such as succinyl-Leu-Tyr-|-NHMec, and Leu-Tyr-Leu-|-Tyr-Trp, in which cleavage of the -Tyr-|-Leu- and -Tyr-|-Trp bonds also occurs).. Cleaves peptides in various proteins in a process that requires ATP hydrolysis. Has a chymotrypsin-like activity. Plays a major role in the degradation of misfolded proteins. The protein is ATP-dependent Clp protease proteolytic subunit of Ruegeria sp. (strain TM1040) (Silicibacter sp.).